The chain runs to 310 residues: Nucleotide-binding protein BAD_0837 (310 aa).

31–38 (GMSGAGRS) is an ATP binding site. Residue 82-85 (DVRS) participates in GTP binding.

The protein belongs to the RapZ-like family.

Functionally, displays ATPase and GTPase activities. This Bifidobacterium adolescentis (strain ATCC 15703 / DSM 20083 / NCTC 11814 / E194a) protein is Nucleotide-binding protein BAD_0837.